We begin with the raw amino-acid sequence, 793 residues long: Endonuclease MutS2 (793 aa).

335–342 is an ATP binding site; the sequence is GPNTGGKT. Residues 718–793 enclose the Smr domain; sequence IDVRGYNLEE…ESGVTIVELR (76 aa).

The protein belongs to the DNA mismatch repair MutS family. MutS2 subfamily. Homodimer. Binds to stalled ribosomes, contacting rRNA.

In terms of biological role, endonuclease that is involved in the suppression of homologous recombination and thus may have a key role in the control of bacterial genetic diversity. Acts as a ribosome collision sensor, splitting the ribosome into its 2 subunits. Detects stalled/collided 70S ribosomes which it binds and splits by an ATP-hydrolysis driven conformational change. Acts upstream of the ribosome quality control system (RQC), a ribosome-associated complex that mediates the extraction of incompletely synthesized nascent chains from stalled ribosomes and their subsequent degradation. Probably generates substrates for RQC. The sequence is that of Endonuclease MutS2 from Acetivibrio thermocellus (strain ATCC 27405 / DSM 1237 / JCM 9322 / NBRC 103400 / NCIMB 10682 / NRRL B-4536 / VPI 7372) (Clostridium thermocellum).